Consider the following 439-residue polypeptide: METFILSSDSDDDCPPPPKRRSIEGVPKSFDGDKKMRFSFDVTRDIILEDSEAPCSSNNIFTPSFRRDSNKTLLKTPVSLRRRSRSMNCMTPIVDTINEPPINQVCSAFVQKEIQLDDDDDDEKESSTEHADDDLNLRALLSPEKKKRKEKVDKRRPFGVEEVQNEFYGVYCLISRSERQCYKNRCYIGYTVDPNRRIMQHNGGRFKGGAKKTDSRGPWDMVCVVHGFPNHVAALRFEWAWQNPAVSKSLKEKQLKKERKETPFAYQLRIACELMNSEAFSRFALTFRWLNTKEELPFPISCTPPNHVKLRYGKVKKEMSLVPAKSADYVAMGECRLCGKDIEKLWGLVRCISQSCHSHFHSKCLAEHGLKNKNEYADQIYPLKSNCPICGHFYLWGDVVREQRRIIKVSTKCAEEFRNKVVRKDLPHREISSRLRLKK.

2 disordered regions span residues 1–28 (METF…GVPK) and 117–140 (DDDD…LRAL). The segment covering 125–136 (ESSTEHADDDLN) has biased composition (basic and acidic residues). In terms of domain architecture, GIY-YIG spans 166–253 (EFYGVYCLIS…PAVSKSLKEK (88 aa)). The segment at 335–390 (CRLCGKDIEKLWGLVRCISQSCHSHFHSKCLAEHGLKNKNEYADQIYPLKSNCPIC) adopts an SLX1-type zinc-finger fold.

The protein belongs to the SLX1 family. Forms a heterodimer with him-18/slx-4. Requires a divalent metal cation as cofactor.

The protein localises to the nucleus. Its function is as follows. Catalytic subunit of a heterodimeric structure-specific endonuclease that resolves DNA secondary structures generated during DNA repair and recombination. Has endonuclease activity towards branched DNA substrates, introducing single-strand cuts in duplex DNA close to junctions with ss-DNA (Potential). Has a preference for replication forks over 5' flap structures or Holliday junctions and shows much lower activity toward 3' flap structures. Required for proper crossover distribution through inhibition of crossover formation at the central region of chromosomes. The chain is Structure-specific endonuclease subunit SLX1 homolog from Caenorhabditis briggsae.